Consider the following 74-residue polypeptide: UPF0248 protein MK0350 (74 aa).

It belongs to the UPF0248 family.

The chain is UPF0248 protein MK0350 from Methanopyrus kandleri (strain AV19 / DSM 6324 / JCM 9639 / NBRC 100938).